Reading from the N-terminus, the 157-residue chain is Phosphopantetheine adenylyltransferase (157 aa).

Position 9 (serine 9) interacts with substrate. ATP-binding positions include 9 to 10 (SF) and histidine 17. The substrate site is built by lysine 41, leucine 74, and lysine 88. Residues 89-91 (GLR), glutamate 99, and 123-129 (YTHVSSS) each bind ATP.

The protein belongs to the bacterial CoaD family. In terms of assembly, homohexamer. Mg(2+) is required as a cofactor.

Its subcellular location is the cytoplasm. It catalyses the reaction (R)-4'-phosphopantetheine + ATP + H(+) = 3'-dephospho-CoA + diphosphate. Its pathway is cofactor biosynthesis; coenzyme A biosynthesis; CoA from (R)-pantothenate: step 4/5. Functionally, reversibly transfers an adenylyl group from ATP to 4'-phosphopantetheine, yielding dephospho-CoA (dPCoA) and pyrophosphate. This chain is Phosphopantetheine adenylyltransferase, found in Micrococcus luteus (strain ATCC 4698 / DSM 20030 / JCM 1464 / CCM 169 / CCUG 5858 / IAM 1056 / NBRC 3333 / NCIMB 9278 / NCTC 2665 / VKM Ac-2230) (Micrococcus lysodeikticus).